Reading from the N-terminus, the 435-residue chain is Hyaluronidase-1 (435 aa).

The first 21 residues, Met-1–Gly-21, serve as a signal peptide directing secretion. Disulfide bonds link Cys-43/Cys-333 and Cys-207/Cys-221. An N-linked (GlcNAc...) asparagine glycan is attached at Asn-99. Glu-131 (proton donor) is an active-site residue. N-linked (GlcNAc...) asparagine glycosylation is found at Asn-216 and Asn-350. Residues Gly-354–Glu-430 form the EGF-like domain. Cystine bridges form between Cys-358–Cys-369, Cys-363–Cys-418, and Cys-420–Cys-429.

Belongs to the glycosyl hydrolase 56 family. As to expression, highly expressed in the liver, kidney and heart. Weakly expressed in lung, placenta and skeletal muscle. No expression detected in adult brain. Isoform 1 is expressed only in bladder and prostate cancer cells, G2/G3 bladder tumor tissues and lymph node specimens showing tumor invasive tumors cells. Isoform 3, isoform 4, isoform 5 and isoform 6 are expressed in normal bladder and bladder tumor tissues.

The protein resides in the secreted. The protein localises to the lysosome. It catalyses the reaction Random hydrolysis of (1-&gt;4)-linkages between N-acetyl-beta-D-glucosamine and D-glucuronate residues in hyaluronate.. Functionally, may have a role in promoting tumor progression. May block the TGFB1-enhanced cell growth. The polypeptide is Hyaluronidase-1 (HYAL1) (Homo sapiens (Human)).